A 380-amino-acid polypeptide reads, in one-letter code: Cytochrome b (380 aa).

The next 4 membrane-spanning stretches (helical) occupy residues 34 to 54 (FGSLLGICLTTQILTGLLLAM), 78 to 99 (WLIRNMHANGASLLFICIYLHI), 114 to 134 (WNTGVILLLTLMATAFVGYVL), and 179 to 199 (FFALHFLLPFMITGLTLIHLT). 2 residues coordinate heme b: H84 and H98. Heme b contacts are provided by H183 and H197. A ubiquinone is bound at residue H202. The next 4 helical transmembrane spans lie at 227–247 (TKDILGFTLMLLPLTTLALFS), 289–309 (LGGVLALAASVLVLFLSPLLH), 321–341 (LSQLLFWTLVANLLILTWIGS), and 348–368 (FIIIGQLASTTYFIILLILFP).

This sequence belongs to the cytochrome b family. The cytochrome bc1 complex contains 11 subunits: 3 respiratory subunits (MT-CYB, CYC1 and UQCRFS1), 2 core proteins (UQCRC1 and UQCRC2) and 6 low-molecular weight proteins (UQCRH/QCR6, UQCRB/QCR7, UQCRQ/QCR8, UQCR10/QCR9, UQCR11/QCR10 and a cleavage product of UQCRFS1). This cytochrome bc1 complex then forms a dimer. Requires heme b as cofactor.

It localises to the mitochondrion inner membrane. Its function is as follows. Component of the ubiquinol-cytochrome c reductase complex (complex III or cytochrome b-c1 complex) that is part of the mitochondrial respiratory chain. The b-c1 complex mediates electron transfer from ubiquinol to cytochrome c. Contributes to the generation of a proton gradient across the mitochondrial membrane that is then used for ATP synthesis. In Pygoscelis antarcticus (Chinstrap penguin), this protein is Cytochrome b (MT-CYB).